We begin with the raw amino-acid sequence, 589 residues long: Putative adenine deaminase BC_3012 (589 aa).

Belongs to the metallo-dependent hydrolases superfamily. Adenine deaminase family.

The enzyme catalyses adenine + H2O + H(+) = hypoxanthine + NH4(+). The protein is Putative adenine deaminase BC_3012 of Bacillus cereus (strain ATCC 14579 / DSM 31 / CCUG 7414 / JCM 2152 / NBRC 15305 / NCIMB 9373 / NCTC 2599 / NRRL B-3711).